Here is a 344-residue protein sequence, read N- to C-terminus: MIKILGIESSCDDTAVSIITENREILSNIIISQNTEHAVFGGVVPEIAARSHLSHLDKALKNVLKESNTKLTDISTIAATSGPGLIGGVIVGSMFARSLSSALKKPFIAINHLEGHALTARLTDNIPYPYLLLLASGGHCQFVAVLGLGKYKILGSTIDDAVGEAFDKVAKMLNLAFPGGPEIEKRAKLGDPHKYKFPKPIINSGNCNMSFSGLKTAVRTLIMNLKEINDTVINDIAASFQFTIGEILSSKVQDAIRAYEQITNNFDKKNIVIAGGVAANKYLQKILSSCAKTYGYRLIYPPIHLCTDNAAMIAYAGLERYNNKLFTPLNFSPKARWSLEDISN.

Positions 112 and 116 each coordinate Fe cation. Substrate contacts are provided by residues 134-138 (LASGG), aspartate 167, glycine 180, and asparagine 280. Aspartate 308 is a binding site for Fe cation.

Belongs to the KAE1 / TsaD family. Fe(2+) serves as cofactor.

It localises to the cytoplasm. The catalysed reaction is L-threonylcarbamoyladenylate + adenosine(37) in tRNA = N(6)-L-threonylcarbamoyladenosine(37) in tRNA + AMP + H(+). Required for the formation of a threonylcarbamoyl group on adenosine at position 37 (t(6)A37) in tRNAs that read codons beginning with adenine. Is involved in the transfer of the threonylcarbamoyl moiety of threonylcarbamoyl-AMP (TC-AMP) to the N6 group of A37, together with TsaE and TsaB. TsaD likely plays a direct catalytic role in this reaction. This is tRNA N6-adenosine threonylcarbamoyltransferase from Rickettsia rickettsii (strain Iowa).